A 103-amino-acid polypeptide reads, in one-letter code: Large ribosomal subunit protein bL21 (103 aa).

Belongs to the bacterial ribosomal protein bL21 family. Part of the 50S ribosomal subunit. Contacts protein L20.

Functionally, this protein binds to 23S rRNA in the presence of protein L20. The sequence is that of Large ribosomal subunit protein bL21 from Salmonella schwarzengrund (strain CVM19633).